The sequence spans 439 residues: Proline--tRNA ligase (439 aa).

Belongs to the class-II aminoacyl-tRNA synthetase family. ProS type 2 subfamily. In terms of assembly, homodimer.

The protein resides in the cytoplasm. The catalysed reaction is tRNA(Pro) + L-proline + ATP = L-prolyl-tRNA(Pro) + AMP + diphosphate. Functionally, catalyzes the attachment of proline to tRNA(Pro) in a two-step reaction: proline is first activated by ATP to form Pro-AMP and then transferred to the acceptor end of tRNA(Pro). The protein is Proline--tRNA ligase of Beijerinckia indica subsp. indica (strain ATCC 9039 / DSM 1715 / NCIMB 8712).